The sequence spans 632 residues: Phosphomethylpyrimidine synthase (632 aa).

Residues N237, M266, Y295, H331, 351 to 353 (SRG), 392 to 395 (DGLR), and E431 each bind substrate. Position 435 (H435) interacts with Zn(2+). Y458 contacts substrate. H499 serves as a coordination point for Zn(2+). [4Fe-4S] cluster-binding residues include C579, C582, and C587.

The protein belongs to the ThiC family. As to quaternary structure, homodimer. The cofactor is [4Fe-4S] cluster.

The catalysed reaction is 5-amino-1-(5-phospho-beta-D-ribosyl)imidazole + S-adenosyl-L-methionine = 4-amino-2-methyl-5-(phosphooxymethyl)pyrimidine + CO + 5'-deoxyadenosine + formate + L-methionine + 3 H(+). It functions in the pathway cofactor biosynthesis; thiamine diphosphate biosynthesis. In terms of biological role, catalyzes the synthesis of the hydroxymethylpyrimidine phosphate (HMP-P) moiety of thiamine from aminoimidazole ribotide (AIR) in a radical S-adenosyl-L-methionine (SAM)-dependent reaction. The chain is Phosphomethylpyrimidine synthase from Nitrosomonas eutropha (strain DSM 101675 / C91 / Nm57).